The chain runs to 644 residues: Threonine--tRNA ligase (644 aa).

One can recognise a TGS domain in the interval 1–61 (MVAITLPDGS…AHDAKVEIVT (61 aa)). Residues 242–533 (DHRKIGKALN…LIENYAGWMP (292 aa)) form a catalytic region. Residues Cys333, His384, and His510 each contribute to the Zn(2+) site.

This sequence belongs to the class-II aminoacyl-tRNA synthetase family. Homodimer. Requires Zn(2+) as cofactor.

The protein resides in the cytoplasm. It catalyses the reaction tRNA(Thr) + L-threonine + ATP = L-threonyl-tRNA(Thr) + AMP + diphosphate + H(+). Catalyzes the attachment of threonine to tRNA(Thr) in a two-step reaction: L-threonine is first activated by ATP to form Thr-AMP and then transferred to the acceptor end of tRNA(Thr). Also edits incorrectly charged L-seryl-tRNA(Thr). In Psychrobacter cryohalolentis (strain ATCC BAA-1226 / DSM 17306 / VKM B-2378 / K5), this protein is Threonine--tRNA ligase.